Consider the following 123-residue polypeptide: Small ribosomal subunit protein uS12 (123 aa).

D89 bears the 3-methylthioaspartic acid mark.

It belongs to the universal ribosomal protein uS12 family. As to quaternary structure, part of the 30S ribosomal subunit. Contacts proteins S8 and S17. May interact with IF1 in the 30S initiation complex.

Its function is as follows. With S4 and S5 plays an important role in translational accuracy. In terms of biological role, interacts with and stabilizes bases of the 16S rRNA that are involved in tRNA selection in the A site and with the mRNA backbone. Located at the interface of the 30S and 50S subunits, it traverses the body of the 30S subunit contacting proteins on the other side and probably holding the rRNA structure together. The combined cluster of proteins S8, S12 and S17 appears to hold together the shoulder and platform of the 30S subunit. In Rhizobium leguminosarum bv. trifolii (strain WSM2304), this protein is Small ribosomal subunit protein uS12.